A 125-amino-acid polypeptide reads, in one-letter code: Holo-[acyl-carrier-protein] synthase (125 aa).

The Mg(2+) site is built by Asp-9 and Glu-58.

The protein belongs to the P-Pant transferase superfamily. AcpS family. Mg(2+) is required as a cofactor.

It is found in the cytoplasm. It catalyses the reaction apo-[ACP] + CoA = holo-[ACP] + adenosine 3',5'-bisphosphate + H(+). Its function is as follows. Transfers the 4'-phosphopantetheine moiety from coenzyme A to a Ser of acyl-carrier-protein. This chain is Holo-[acyl-carrier-protein] synthase, found in Shewanella amazonensis (strain ATCC BAA-1098 / SB2B).